We begin with the raw amino-acid sequence, 35 residues long: Cupiennin-1a (35 aa).

Glu-35 bears the Glutamic acid 1-amide mark.

It belongs to the cationic peptide 04 (cupiennin) family. 01 subfamily. In terms of assembly, monomer. Interacts with CSTX-1 (AC P81694), CSTX-9 (AC P58604), and CSTX-13 (AC P83919). In terms of tissue distribution, expressed by the venom gland.

It is found in the secreted. In terms of biological role, has antimicrobial activity against B.subtilis, E.coli, E.faecalis, P.denitrificans, P.aeruginosa, P.putida, S.aureus, and S.epidermidis. Shows insecticidal and hemolytic activities. Probably acts by disturbing membrane function with its amphipathic structure. Synergistically increases the insecticidal activity of CSTX-1 (AC P81694), CSTX-9 (AC P58604), and CSTX-13 (AC P83919) by up to 65%. Also inhibits the formation of nitric oxide by neuronal nitric oxide synthase. The protein is Cupiennin-1a of Cupiennius salei (American wandering spider).